The sequence spans 782 residues: Chondroitin proteoglycan 4 (782 aa).

The first 18 residues, 1–18, serve as a signal peptide directing secretion; that stretch reads MRLVYSLIFLLFIPFSHP. Residues N76, N208, N462, N468, N474, and N503 are each glycosylated (N-linked (GlcNAc...) asparagine). Residues 513-726 form a disordered region; it reads ISEKSTEESS…EDQGSGNYKK (214 aa). Low complexity-rich tracts occupy residues 520 to 532, 548 to 566, 573 to 612, 662 to 672, and 688 to 722; these read ESSGSSGEMSGDG, SGSSGDNSGEFNSSGSSGE, SSGSEDQGSGNYKMIESIESSGEFSGSSGEGSGDTASSDT, FGESSGSSGES, and SGSSGDNSGDFNSSGSSGEASGVGESSGSEDQGSG. Residue N559 is glycosylated (N-linked (GlcNAc...) asparagine). A glycan (O-linked (Xyl...) (chondroitin sulfate) serine) is linked at S691. N699 carries N-linked (GlcNAc...) asparagine glycosylation. 5 O-linked (Xyl...) (chondroitin sulfate) serine glycosylation sites follow: S701, S704, S708, S714, and S721. The N-linked (GlcNAc...) asparagine glycan is linked to N743.

This Caenorhabditis elegans protein is Chondroitin proteoglycan 4.